The chain runs to 419 residues: MLKRSMNIADYDPVLWQAIQDENLRQEEHIELIASENYASPRVMEAQGCQFTNKYAEGYPGKRYYGGCEYADIVEQLAIDRAKALFGADYANVQPHSGSQANAAVYMALLNPGDTILGMSLAHGGHLTHGASVSFSGKIYKAEQYGITSEGLIDYDALRKQAHEVKPKMIVGGFSAYSQIVDWAKMREIADEVGAYLFVDMAHVAGLIAAGVYPSPMPHAHVVTTTTHKTLAGPRGGLILANGNEELYKKLNSAVFPAGQGGPLVHVIAAKAVCFKEALEPEFKTYQAQVVKNAKAMVKVFKQRGYNVVSNGTENHLFLVDLVNHGLTGKAADAALSRANITVNKNAVPNDPQKPFVTSGIRVGTPAVTRRGFNEEDVAELAGWMCDILDSMNKDNHEQVIADTKEKVLAICKRLPVYP.

(6S)-5,6,7,8-tetrahydrofolate is bound by residues leucine 121 and 125-127 (GHL). Lysine 229 is modified (N6-(pyridoxal phosphate)lysine).

It belongs to the SHMT family. In terms of assembly, homodimer. The cofactor is pyridoxal 5'-phosphate.

The protein localises to the cytoplasm. The catalysed reaction is (6R)-5,10-methylene-5,6,7,8-tetrahydrofolate + glycine + H2O = (6S)-5,6,7,8-tetrahydrofolate + L-serine. The protein operates within one-carbon metabolism; tetrahydrofolate interconversion. Its pathway is amino-acid biosynthesis; glycine biosynthesis; glycine from L-serine: step 1/1. Catalyzes the reversible interconversion of serine and glycine with tetrahydrofolate (THF) serving as the one-carbon carrier. This reaction serves as the major source of one-carbon groups required for the biosynthesis of purines, thymidylate, methionine, and other important biomolecules. Also exhibits THF-independent aldolase activity toward beta-hydroxyamino acids, producing glycine and aldehydes, via a retro-aldol mechanism. This Histophilus somni (strain 2336) (Haemophilus somnus) protein is Serine hydroxymethyltransferase.